Here is a 477-residue protein sequence, read N- to C-terminus: Argininosuccinate lyase (477 aa).

It belongs to the lyase 1 family. Argininosuccinate lyase subfamily.

It is found in the cytoplasm. The enzyme catalyses 2-(N(omega)-L-arginino)succinate = fumarate + L-arginine. It participates in amino-acid biosynthesis; L-arginine biosynthesis; L-arginine from L-ornithine and carbamoyl phosphate: step 3/3. This Corynebacterium efficiens (strain DSM 44549 / YS-314 / AJ 12310 / JCM 11189 / NBRC 100395) protein is Argininosuccinate lyase.